The sequence spans 137 residues: Ciliary microtubule inner protein 1 (137 aa).

Expressed in airway epithelial cells, renal tubular cells, pancreatic acinar cells and epithelial cells of the stomach, duodenum, and gallbladder (at protein level).

It is found in the cell projection. The protein resides in the cilium. The protein is Ciliary microtubule inner protein 1 of Homo sapiens (Human).